We begin with the raw amino-acid sequence, 944 residues long: Protein unc-45 homolog A (944 aa).

The segment at M1 to R25 is disordered. TPR repeat units follow at residues A21–P54, A58–D91, and V92–N125. K70 is modified (N6-acetyllysine). An N6-acetyllysine modification is found at K483.

In terms of assembly, interacts with PGR isoforms A and B as well as with NR3C1 in the absence of ligand, and with HSP90AB1. Binding to HSP90AB1 involves 2 UNC45A monomers per HSP90AB1 dimer. Detected in spleen, bone marrow, lung and ovary, and at lower levels in testis, kidney, heart and brain (at protein level). Ubiquitous. Detected in uterus, large intestine, kidney, spleen, lung, brain, liver and ovary.

It localises to the cytoplasm. It is found in the perinuclear region. The protein localises to the nucleus. Its function is as follows. May act as co-chaperone for HSP90 (Potential). Prevents the stimulation of HSP90AB1 ATPase activity by AHSA1. Positive factor in promoting PGR function in the cell. May be necessary for proper folding of myosin (Potential). Necessary for normal cell proliferation. Necessary for normal myotube formation and myosin accumulation during muscle cell development. May play a role in erythropoiesis in stroma cells in the spleen. This Mus musculus (Mouse) protein is Protein unc-45 homolog A (Unc45a).